A 1849-amino-acid chain; its full sequence is Mitogen-activated protein kinase kinase kinase mkh1 (1849 aa).

Residues 1556-1825 (WFKGQLIGKG…TKLLAEHPFC (270 aa)) enclose the Protein kinase domain. ATP-binding positions include 1562-1570 (IGKGTYGRV) and K1585. D1686 functions as the Proton acceptor in the catalytic mechanism.

Belongs to the protein kinase superfamily. STE Ser/Thr protein kinase family. MAP kinase kinase kinase subfamily.

It catalyses the reaction L-seryl-[protein] + ATP = O-phospho-L-seryl-[protein] + ADP + H(+). It carries out the reaction L-threonyl-[protein] + ATP = O-phospho-L-threonyl-[protein] + ADP + H(+). Functionally, mitogen-activated protein kinase kinase kinase, part of the mkh1-mkk1-spm1 MAPK cascade that regulates vegetative growth, conidial formation, colony surface hydrophobicity, osmotic stress, cell wall integrity maintenance, carbon and nitrogen source utilization, chitin distribution, septa formation, and pathogenicity. This chain is Mitogen-activated protein kinase kinase kinase mkh1, found in Cytospora mali (Apple Valsa canker fungus).